A 379-amino-acid chain; its full sequence is Cobalt-precorrin-5B C(1)-methyltransferase (379 aa).

It belongs to the CbiD family.

The enzyme catalyses Co-precorrin-5B + S-adenosyl-L-methionine = Co-precorrin-6A + S-adenosyl-L-homocysteine. The protein operates within cofactor biosynthesis; adenosylcobalamin biosynthesis; cob(II)yrinate a,c-diamide from sirohydrochlorin (anaerobic route): step 6/10. Catalyzes the methylation of C-1 in cobalt-precorrin-5B to form cobalt-precorrin-6A. The sequence is that of Cobalt-precorrin-5B C(1)-methyltransferase from Salmonella typhimurium (strain LT2 / SGSC1412 / ATCC 700720).